We begin with the raw amino-acid sequence, 461 residues long: Argininosuccinate lyase (461 aa).

It belongs to the lyase 1 family. Argininosuccinate lyase subfamily.

The protein localises to the cytoplasm. It catalyses the reaction 2-(N(omega)-L-arginino)succinate = fumarate + L-arginine. The protein operates within amino-acid biosynthesis; L-arginine biosynthesis; L-arginine from L-ornithine and carbamoyl phosphate: step 3/3. This is Argininosuccinate lyase from Symbiobacterium thermophilum (strain DSM 24528 / JCM 14929 / IAM 14863 / T).